Consider the following 481-residue polypeptide: RuvB-like helicase 2 (481 aa).

73-80 (GEPSTGKT) serves as a coordination point for ATP. Residues 453-481 (EEVERDPAAGGGAKRRVEGGGGDAQPMEH) are disordered.

The protein belongs to the RuvB family. Forms homohexameric rings. May form a dodecamer with rept made of two stacked hexameric rings. Component of the chromatin remodeling Ino80 complex. Interacts with Myc and pont. As to expression, higher expression occurs in primordia of mesoderm, anterior and posterior midgut and cephalic furrow early in gastrulation, as well as in endoderm and mesoderm lineages during germ band extension. Later in development expression is only maintained in endoderm cells. Expressed in thoracic and abdominal segment neural precursors of all embryonic chordotonal organs.

The protein localises to the nucleus. The catalysed reaction is ATP + H2O = ADP + phosphate + H(+). Functionally, acts as a transcriptional coactivator in Wg signaling caused by altered arm signaling. Pont and rept interfere antagonistically with nuclear arm signaling function, and are required to enhance or reduce arm activity, respectively. Also an essential cofactor for the normal function of Myc; required for cellular proliferation and growth. In terms of biological role, proposed core component of the chromatin remodeling Ino80 complex which is involved in transcriptional regulation, DNA replication and probably DNA repair. This is RuvB-like helicase 2 from Drosophila melanogaster (Fruit fly).